The following is a 258-amino-acid chain: Indole-3-glycerol phosphate synthase (258 aa).

Belongs to the TrpC family.

It carries out the reaction 1-(2-carboxyphenylamino)-1-deoxy-D-ribulose 5-phosphate + H(+) = (1S,2R)-1-C-(indol-3-yl)glycerol 3-phosphate + CO2 + H2O. The protein operates within amino-acid biosynthesis; L-tryptophan biosynthesis; L-tryptophan from chorismate: step 4/5. The chain is Indole-3-glycerol phosphate synthase from Campylobacter fetus subsp. fetus (strain 82-40).